A 119-amino-acid chain; its full sequence is Large ribosomal subunit protein bL20c (119 aa).

The protein belongs to the bacterial ribosomal protein bL20 family.

It localises to the plastid. It is found in the chloroplast. Its function is as follows. Binds directly to 23S ribosomal RNA and is necessary for the in vitro assembly process of the 50S ribosomal subunit. It is not involved in the protein synthesizing functions of that subunit. The polypeptide is Large ribosomal subunit protein bL20c (Lolium perenne (Perennial ryegrass)).